Here is a 374-residue protein sequence, read N- to C-terminus: MAAMFSNTRSVASSSGHIVEFKAGRSRLEAGSGDTMRKVVAEPKKGLVFIKQSNDMLIHFCWKDRETGAVVDDLIIFPDDAEFKAVPGCPDGKVYMLKFKSGDMKLFWIQDSTPDVDKDLVKKVTDALNKPPTSRPAASRSAGSNANTDRQSAGGSLISSSDMNAPLGGIDQGQLMSLIQSLQGGNSDTLPISSVPRGEDASSEADCEPSTNAAEEGSSNPLSLNNPAIQQIFNNLGRSQKKEVAVSLATALSNETVAEVARNHAEELAPHLPTSDDPARELSETVRTPQFRQAADTLGHALQTGQLGPVVAQFGMDEATVGSANQGDIRGFAANLTKAEGGEDAAKTQNSDDDATREPEPKRNRPDNEDMDVD.

The Pru domain maps to 13–131 (SSSGHIVEFK…KKVTDALNKP (119 aa)). 3 disordered regions span residues 126–166 (DALN…MNAP), 187–223 (SDTLPISSVPRGEDASSEADCEPSTNAAEEGSSNPLS), and 334–374 (ANLT…MDVD). Polar residues-rich tracts occupy residues 141–163 (SAGSNANTDRQSAGGSLISSSDM) and 209–223 (PSTNAAEEGSSNPLS). The region spanning 239-346 (SQKKEVAVSL…TKAEGGEDAA (108 aa)) is the DEUBAD domain. The segment covering 354-368 (DATREPEPKRNRPDN) has biased composition (basic and acidic residues).

It belongs to the ADRM1 family. As to quaternary structure, component of the 19S proteasome regulatory particle complex. The 26S proteasome consists of a 20S core particle (CP) and two 19S regulatory subunits (RP). Interacts with deubiquitinase ubh-4.

Its subcellular location is the cytoplasm. It localises to the nucleus. Functionally, may function as a proteasomal ubiquitin receptor. May promote the deubiquitinating activity associated with the 26S proteasome. The protein is Proteasomal ubiquitin receptor ADRM1 homolog of Caenorhabditis elegans.